Here is a 224-residue protein sequence, read N- to C-terminus: uncharacterized protein (224 aa).

S-adenosyl-L-methionine-binding residues include G177, I197, and L206.

The protein belongs to the class IV-like SAM-binding methyltransferase superfamily. RNA methyltransferase TrmH family.

This is an uncharacterized protein from Archaeoglobus fulgidus (strain ATCC 49558 / DSM 4304 / JCM 9628 / NBRC 100126 / VC-16).